Consider the following 216-residue polypeptide: uncharacterized protein (216 aa).

Residues 1–21 (MTIVHFVGSLFFFFFFSYIFF) traverse the membrane as a helical segment.

The protein localises to the membrane. This is an uncharacterized protein from Saccharomyces cerevisiae (strain ATCC 204508 / S288c) (Baker's yeast).